Reading from the N-terminus, the 192-residue chain is Ion-translocating oxidoreductase complex subunit A (192 aa).

Transmembrane regions (helical) follow at residues 5–25 (LLLL…FLGL), 39–59 (IGMS…SYLV), 65–85 (LPFD…AVVV), 102–122 (ALGI…VALL), 134–154 (AIYG…FSAM), and 171–191 (AIAM…TGLV).

Belongs to the NqrDE/RnfAE family. The complex is composed of six subunits: RnfA, RnfB, RnfC, RnfD, RnfE and RnfG.

Its subcellular location is the cell inner membrane. In terms of biological role, part of a membrane-bound complex that couples electron transfer with translocation of ions across the membrane. The protein is Ion-translocating oxidoreductase complex subunit A of Shewanella putrefaciens (strain CN-32 / ATCC BAA-453).